We begin with the raw amino-acid sequence, 130 residues long: Small ribosomal subunit protein uS8 (130 aa).

The protein belongs to the universal ribosomal protein uS8 family. As to quaternary structure, part of the 30S ribosomal subunit. Contacts proteins S5 and S12.

Functionally, one of the primary rRNA binding proteins, it binds directly to 16S rRNA central domain where it helps coordinate assembly of the platform of the 30S subunit. This chain is Small ribosomal subunit protein uS8, found in Aeromonas salmonicida (strain A449).